The primary structure comprises 266 residues: 4-hydroxy-tetrahydrodipicolinate reductase (266 aa).

10–15 (GPRGRM) lines the NAD(+) pocket. Lys38 is a binding site for NADP(+). Residues 99 to 101 (GTT) and 125 to 128 (APNF) contribute to the NAD(+) site. His155 serves as the catalytic Proton donor/acceptor. Residue His156 coordinates (S)-2,3,4,5-tetrahydrodipicolinate. Residue Lys159 is the Proton donor of the active site. 165-166 (GT) contacts (S)-2,3,4,5-tetrahydrodipicolinate.

This sequence belongs to the DapB family.

It is found in the cytoplasm. It carries out the reaction (S)-2,3,4,5-tetrahydrodipicolinate + NAD(+) + H2O = (2S,4S)-4-hydroxy-2,3,4,5-tetrahydrodipicolinate + NADH + H(+). It catalyses the reaction (S)-2,3,4,5-tetrahydrodipicolinate + NADP(+) + H2O = (2S,4S)-4-hydroxy-2,3,4,5-tetrahydrodipicolinate + NADPH + H(+). It functions in the pathway amino-acid biosynthesis; L-lysine biosynthesis via DAP pathway; (S)-tetrahydrodipicolinate from L-aspartate: step 4/4. Functionally, catalyzes the conversion of 4-hydroxy-tetrahydrodipicolinate (HTPA) to tetrahydrodipicolinate. This chain is 4-hydroxy-tetrahydrodipicolinate reductase, found in Bacillus cytotoxicus (strain DSM 22905 / CIP 110041 / 391-98 / NVH 391-98).